A 451-amino-acid polypeptide reads, in one-letter code: Phosphoglucosamine mutase (451 aa).

Serine 102 serves as the catalytic Phosphoserine intermediate. 4 residues coordinate Mg(2+): serine 102, aspartate 243, aspartate 245, and aspartate 247. The residue at position 102 (serine 102) is a Phosphoserine.

This sequence belongs to the phosphohexose mutase family. Mg(2+) is required as a cofactor. Post-translationally, activated by phosphorylation.

The enzyme catalyses alpha-D-glucosamine 1-phosphate = D-glucosamine 6-phosphate. Catalyzes the conversion of glucosamine-6-phosphate to glucosamine-1-phosphate. This Paramagnetospirillum magneticum (strain ATCC 700264 / AMB-1) (Magnetospirillum magneticum) protein is Phosphoglucosamine mutase.